We begin with the raw amino-acid sequence, 372 residues long: GTPase Obg (372 aa).

One can recognise an Obg domain in the interval 1-159 (MAFVDEAKFF…KWLLIELKLM (159 aa)). The interval 121 to 141 (GSGGMGNPHFSSGSNRTPRVA) is disordered. In terms of domain architecture, OBG-type G spans 160–329 (ADVGLVGLPN…LVKLIGDIID (170 aa)). GTP-binding positions include 166–173 (GLPNAGKS), 191–195 (FTTLE), 213–216 (DIPG), 280–283 (NKCD), and 310–312 (SAI). Residues S173 and T193 each contribute to the Mg(2+) site. The tract at residues 346–372 (QDLKKQKEEERRQELKKQKEEEQAKDE) is disordered.

It belongs to the TRAFAC class OBG-HflX-like GTPase superfamily. OBG GTPase family. As to quaternary structure, monomer. The cofactor is Mg(2+).

The protein resides in the cytoplasm. In terms of biological role, an essential GTPase which binds GTP, GDP and possibly (p)ppGpp with moderate affinity, with high nucleotide exchange rates and a fairly low GTP hydrolysis rate. Plays a role in control of the cell cycle, stress response, ribosome biogenesis and in those bacteria that undergo differentiation, in morphogenesis control. This Desulfotalea psychrophila (strain LSv54 / DSM 12343) protein is GTPase Obg.